The following is a 241-amino-acid chain: MGKTMFKKTLLFFTALFFAALCAFSANADVIITGTRVIYPAGQKNVIVKLENNDDSAALVQAWIDNGNPNADPKYTKTPFVITPPVARVEAKSGQSLRITFTGSEPLPDDRESLFYFNLLDIPPKPDAAFLAKHGSFMQIAIRSRLKLFYRPAKLSMDSRDAMKKVVFKATPEGVLVDNQTPYYMNYIGLLHQNKPAKNVKMVAPFSQAVFEAKGVRSGDKLKWVLVNDYGADQEGEAIAQ.

The signal sequence occupies residues 1–27 (MGKTMFKKTLLFFTALFFAALCAFSAN).

Belongs to the periplasmic pilus chaperone family.

It localises to the periplasm. Mediates assembly of pili by forming soluble multimeric complexes with pili subunits as an intermediate step in the assembly process. This protein is involved in type B pili (HifA) assembly. The polypeptide is Chaperone protein HifB (hifB) (Haemophilus influenzae).